The chain runs to 262 residues: tRNA pseudouridine synthase A (262 aa).

Aspartate 51 functions as the Nucleophile in the catalytic mechanism. Substrate is bound at residue tyrosine 109.

Belongs to the tRNA pseudouridine synthase TruA family. In terms of assembly, homodimer.

It carries out the reaction uridine(38/39/40) in tRNA = pseudouridine(38/39/40) in tRNA. Formation of pseudouridine at positions 38, 39 and 40 in the anticodon stem and loop of transfer RNAs. The polypeptide is tRNA pseudouridine synthase A (Aliivibrio salmonicida (strain LFI1238) (Vibrio salmonicida (strain LFI1238))).